The chain runs to 359 residues: MNTNNNFSNGEEVSIHIGTGIDIAAKAWGPKESSQKMLALHGWLDNANTFDFIAPILAEKGIRIIAIDFIGHGLSPHKPSWCNLYYTDYITQVLDVAEALQWKTFSIMGHSMGAGIASIVAASMPHLVERIICLDFIGILSKEQDQIKAIQFAMQTRTTINNRKPHLYNNKQAIFDKLKANNPWIKDEAGQRLLDRSIESVISPTTGEQCYKLRHDPRLVGPSIFIMREAEVLLMLDEIQCPVLLIWGTTSSQQFQIKKNWTQIMEGRMSHIKNLKQLVVPGSHHFHMENTSAFSQDILEFMFEEKDLSFTPSSTTQQQQQQQQSAENKKGDNHNQIAEQDLSTSNTSSPIISKPKPNL.

Residues 38-289 form the AB hydrolase-1 domain; the sequence is LALHGWLDNA…VPGSHHFHME (252 aa). The active site involves S111. The interval 310–359 is disordered; that stretch reads FTPSSTTQQQQQQQQSAENKKGDNHNQIAEQDLSTSNTSSPIISKPKPNL. A compositionally biased stretch (polar residues) spans 334-351; the sequence is HNQIAEQDLSTSNTSSPI.

It belongs to the AB hydrolase superfamily.

In terms of biological role, probable serine hydrolase. The polypeptide is Serine hydrolase-like protein DDB_G0286239 (Dictyostelium discoideum (Social amoeba)).